A 474-amino-acid polypeptide reads, in one-letter code: Trehalose-6-phosphate synthase (474 aa).

Arginine 10 is a D-glucose 6-phosphate binding site. 22–23 (GG) contacts UDP-alpha-D-glucose. D-glucose 6-phosphate contacts are provided by tyrosine 77 and aspartate 131. Residues arginine 263 and lysine 268 each contribute to the UDP-alpha-D-glucose site. Arginine 301 is a D-glucose 6-phosphate binding site. UDP-alpha-D-glucose-binding positions include phenylalanine 340 and 366 to 370 (LVAKE).

Belongs to the glycosyltransferase 20 family. As to quaternary structure, homotetramer.

It carries out the reaction D-glucose 6-phosphate + UDP-alpha-D-glucose = alpha,alpha-trehalose 6-phosphate + UDP + H(+). Its pathway is glycan biosynthesis; trehalose biosynthesis. Functionally, probably involved in the osmoprotection via the biosynthesis of trehalose. Catalyzes the transfer of glucose from UDP-alpha-D-glucose (UDP-Glc) to D-glucose 6-phosphate (Glc-6-P) to form trehalose-6-phosphate. Acts with retention of the anomeric configuration of the UDP-sugar donor. The chain is Trehalose-6-phosphate synthase from Enterobacter sp. (strain 638).